Reading from the N-terminus, the 383-residue chain is Protein phosphatase 2C homolog 4 (383 aa).

The PPM-type phosphatase domain occupies 51–356; sequence SLGLCTARGD…DDITCLVVRL (306 aa). Mn(2+)-binding residues include Asp-92, Asp-308, and Asp-347.

The protein belongs to the PP2C family. As to quaternary structure, monomer. Mg(2+) serves as cofactor. Requires Mn(2+) as cofactor.

Its subcellular location is the vacuole membrane. The catalysed reaction is O-phospho-L-seryl-[protein] + H2O = L-seryl-[protein] + phosphate. It catalyses the reaction O-phospho-L-threonyl-[protein] + H2O = L-threonyl-[protein] + phosphate. Its function is as follows. Has a role in the regulation of vacuole fusion. The chain is Protein phosphatase 2C homolog 4 (ptc4) from Schizosaccharomyces pombe (strain 972 / ATCC 24843) (Fission yeast).